The following is a 209-amino-acid chain: MGGGRGLLGRETLGPGGGCSGEGPLCYWPPPGSPPAPSLRASLPLEPPRCPLRSCSLPRSACLCSRNSAPGSCCRPWASLWSEPPPSPSSQPAPPMYIWTLSCAPAASWAPVTHWTDHPLPPLPSPLLPTRLPDDYIILPTDLRCHSHRHPSHPTDRLLLLVIWTHLGGIWAGHSPWTVIQTAGRPPRDLSPSARPISSPPPETSCVLA.

The segment at 182 to 209 (TAGRPPRDLSPSARPISSPPPETSCVLA) is disordered. Position 206 is a cysteine methyl ester (Cys-206). The S-farnesyl cysteine moiety is linked to residue Cys-206. A propeptide spans 207 to 209 (VLA) (removed in mature form).

Ubiquitous.

The protein localises to the cell membrane. This chain is CAAX box protein 1, found in Homo sapiens (Human).